We begin with the raw amino-acid sequence, 173 residues long: Large ribosomal subunit protein uL5 (173 aa).

It belongs to the universal ribosomal protein uL5 family. In terms of assembly, component of the large ribosomal subunit.

Its subcellular location is the nucleus. The protein resides in the cytoplasm. Functionally, component of the ribosome, a large ribonucleoprotein complex responsible for the synthesis of proteins in the cell. The small ribosomal subunit (SSU) binds messenger RNAs (mRNAs) and translates the encoded message by selecting cognate aminoacyl-transfer RNA (tRNA) molecules. The large subunit (LSU) contains the ribosomal catalytic site termed the peptidyl transferase center (PTC), which catalyzes the formation of peptide bonds, thereby polymerizing the amino acids delivered by tRNAs into a polypeptide chain. The nascent polypeptides leave the ribosome through a tunnel in the LSU and interact with protein factors that function in enzymatic processing, targeting, and the membrane insertion of nascent chains at the exit of the ribosomal tunnel. The protein is Large ribosomal subunit protein uL5 (RPL11) of Encephalitozoon cuniculi (strain GB-M1) (Microsporidian parasite).